The sequence spans 156 residues: Protein LlR18B (156 aa).

Trans-zeatin-binding residues include D8 and D28. 2 residues coordinate Ca(2+): P32 and I38. 3 residues coordinate trans-zeatin: K54, E133, and K136.

Belongs to the BetVI family. Ubiquitous, with higher levels in roots.

It is found in the cytoplasm. It localises to the cytosol. Its function is as follows. Class II ribonuclease (RNase), with low activity on single-strand RNA. Binds to cytokinins. Interacts with melatonin. The chain is Protein LlR18B (LLR18B) from Lupinus luteus (European yellow lupine).